Reading from the N-terminus, the 596-residue chain is Leucine-rich repeat and IQ domain-containing protein 4 (596 aa).

LRR repeat units follow at residues 22 to 44 (LPRL…LLRQ), 59 to 83 (LTDR…ILAL), 84 to 106 (KELE…IQQL), 108 to 129 (NTKV…LGAL), 130 to 152 (SSLE…VVSR), 153 to 176 (LRTL…ICKS), 177 to 200 (LHHL…IVNQ), 202 to 223 (KLRE…LCVL), 224 to 246 (YNLE…IGHL), 248 to 269 (RLQK…LSQC), 270 to 293 (SKLS…ELLT), 295 to 315 (LTEV…LCSW), 317 to 337 (SLHL…SFKR), 338 to 361 (LINL…ICAL), 362 to 384 (KNLE…ISLL), 385 to 407 (SNLK…IFSL), 410 to 433 (LEKL…IKRL), 434 to 457 (MNLK…GLMP), 459 to 479 (LEVL…ICRT), 480 to 502 (RNLR…LDHL), 504 to 525 (NLKV…VCNQ), and 527 to 549 (NEAI…TIQA). The region spanning 540 to 569 (RKMMATTIQAWWRGIMVRKGYGSYEELLKA) is the IQ domain. Over residues 569 to 587 (ARKKGKSPPKDKKGKKAAK) the composition is skewed to basic residues. The segment at 569–596 (ARKKGKSPPKDKKGKKAAKGKPEKGNKK) is disordered.

The sequence is that of Leucine-rich repeat and IQ domain-containing protein 4 (Lrriq4) from Mus musculus (Mouse).